The sequence spans 475 residues: FAD-dependent monooxygenase sdgC (475 aa).

A signal peptide spans 1–23 (MDKRSFKVIVVGGSIAGLTLAHS). Positions 35, 49, and 126 each coordinate FAD. The N-linked (GlcNAc...) asparagine glycan is linked to Asn236. Ala330 contacts FAD. A helical membrane pass occupies residues 446 to 466 (ISGVLLLVIPIIALVYGYSVI).

The protein belongs to the paxM FAD-dependent monooxygenase family. FAD serves as cofactor.

The protein localises to the membrane. The protein operates within secondary metabolite biosynthesis. In terms of biological role, FAD-dependent monooxygenase; part of the gene cluster that mediates the biosynthesis of the polyenes aspernidgulenes. The carbon backbone of aspernidgulenes is synthesized by the HR-PKS sdgA, which accepts acetyl-CoA as the starter unit and performs malonyl-CoA extensions as well as regioselective methylation and reduction. The resulting nonaketide offloads the HR-PKS by intramolecular lactonization to yield the 5,6-dihydro-alpha-pyrone-containing hexaenoic acids preaspernidgulene A1 and A2. The FAD-dependent monooxygenase sdgC then installs the first epoxide on the penultimate double bond. Subsequently, the FAD-dependent monooxygenase sdgF presumably generates a ketone intermediate through Meinwald rearrangement involving a hydride shift. Next, sdgC introduces another epoxide on the last olefin of the ketone intermediate after E/Z isomerization. The epoxide hydrolase sdgD then catalyzes stereospecific cyclization of the 5,6-dihydro-alpha-pyrone and opening of the epoxide ring to form an oxygenated trimethylcyclopentanone and an oxabicyclo[2.2.1]heptane unit. Finally, the bicyclic unit undergoes hydrolytic cleavage, either spontaneously or catalyzed by sdgD, to assemble the dimethyl-gamma-lactone moiety in aspernidgulene A1. The chain is FAD-dependent monooxygenase sdgC from Emericella nidulans (strain FGSC A4 / ATCC 38163 / CBS 112.46 / NRRL 194 / M139) (Aspergillus nidulans).